A 165-amino-acid polypeptide reads, in one-letter code: Type 3 secretion system regulator YopR (165 aa).

This sequence belongs to the YopR family.

Its subcellular location is the secreted. In terms of biological role, may be involved in the regulation of the assembly of the type III secretion system (T3SS), also called injectisome, which is used to inject bacterial effector proteins into eukaryotic host cells. May control the secretion and/or polymerization of YscF/SctF, the principal component of the needle filament, thereby impacting the assembly of the T3SS. Involved in pathogenesis. This is Type 3 secretion system regulator YopR from Yersinia pestis.